Reading from the N-terminus, the 583-residue chain is Putative amidase C869.01 (583 aa).

Residues 1-19 (MKLQLLFLTLAQLAKHGLA) form the signal peptide. Active-site charge relay system residues include lysine 141 and serine 222. Residue serine 246 is the Acyl-ester intermediate of the active site.

Belongs to the amidase family.

It localises to the cytoplasm. The enzyme catalyses a monocarboxylic acid amide + H2O = a monocarboxylate + NH4(+). The sequence is that of Putative amidase C869.01 from Schizosaccharomyces pombe (strain 972 / ATCC 24843) (Fission yeast).